Here is a 500-residue protein sequence, read N- to C-terminus: Cytochrome P450 11B3, mitochondrial (500 aa).

Residues 1–24 (MALRVTADVWLARPWQCLHRTRAL) constitute a mitochondrion transit peptide. A heme-binding site is contributed by Cys447.

Belongs to the cytochrome P450 family. It depends on heme as a cofactor. As to expression, expressed in the adrenal cortex and in different brain tissues, including hippocampus, hypothalamus, cerebellum, cerebral cortex, and midbrain.

Its subcellular location is the mitochondrion membrane. It carries out the reaction a steroid + 2 reduced [adrenodoxin] + O2 + 2 H(+) = an 11beta-hydroxysteroid + 2 oxidized [adrenodoxin] + H2O. The catalysed reaction is 21-hydroxyprogesterone + 2 reduced [adrenodoxin] + O2 + 2 H(+) = corticosterone + 2 oxidized [adrenodoxin] + H2O. The enzyme catalyses 21-hydroxyprogesterone + 2 reduced [adrenodoxin] + O2 + 2 H(+) = 18-hydroxy-11-deoxycorticosterone + 2 oxidized [adrenodoxin] + H2O. It catalyses the reaction 21-hydroxyprogesterone + 2 reduced [adrenodoxin] + O2 + 2 H(+) = 19-hydroxy-11-deoxycorticosterone + 2 oxidized [adrenodoxin] + H2O. In terms of biological role, a cytochrome P450 monooxygenase involved in the biosynthesis of adrenal corticoids. Catalyzes the hydroxylation of steroids at 11beta, 18- or 19-positions, with preferred regioselectivity at 11beta and 18. Converts 11-deoxycorticosterone into corticosterone, 18-hydroxy-11-deoxycorticosterone, and/or 19-hydroxy-11-deoxycorticosterone, but not to 18-hydroxycorticosterone or aldosterone. Mechanistically, uses molecular oxygen inserting one oxygen atom into a substrate for hydroxylation and reducing the second into a water molecule. Two electrons are provided by NADPH via a two-protein mitochondrial transfer system comprising flavoprotein FDXR (adrenodoxin/ferredoxin reductase) and nonheme iron-sulfur protein FDX1 or FDX2 (adrenodoxin/ferredoxin). This Rattus norvegicus (Rat) protein is Cytochrome P450 11B3, mitochondrial (Cyp11b3).